The chain runs to 1319 residues: Uromodulin-like 1 (1319 aa).

The first 22 residues, 1–22 (MMSRTVRLVLLALACTVDLSQA), serve as a signal peptide directing secretion. Residues 23 to 1273 (SGFTENGLSL…CTKPVLGTGY (1251 aa)) lie on the Extracellular side of the membrane. Residues 34 to 107 (SYQLCSYPVT…FEQLGLYCVL (74 aa)) enclose the EMI domain. 3 disulfide bridges follow: C38/C95, C62/C71, and C94/C105. N-linked (GlcNAc...) asparagine glycosylation occurs at N90. Residue N110 is glycosylated (N-linked (GlcNAc...) asparagine). In terms of domain architecture, WAP spans 115–159 (FASRPGVCPTAEAEPLSPSCSLDTDCSGLQKCCSWPGGRHCVSPT). N172, N193, and N243 each carry an N-linked (GlcNAc...) asparagine glycan. The EGF-like 1; calcium-binding domain occupies 265–306 (DVNECLHSELQACSVREQCRNLEGSYQCVSSQRLNHTDEDCP). Cystine bridges form between C269-C283 and C277-C292. One can recognise a Fibronectin type-III 1 domain in the interval 307-391 (PIRDFVALNV…ATLVVKTDAQ (85 aa)). N315 carries an N-linked (GlcNAc...) asparagine glycan. The SEA 1 domain maps to 389-503 (DAQVFQVTIR…QRTFVQDWDE (115 aa)). The 46-residue stretch at 500–545 (DWDECAHSSEHDCHPSARCINLEGSYTCQCLTARDASPSRAGRVCE) folds into the EGF-like 2; calcium-binding domain. Cystine bridges form between C504-C518, C512-C527, and C529-C544. Disordered regions lie at residues 569-649 (TGIT…ITKD) and 664-703 (HSSPTWKTPPNSTRLQNEDPRSSSFPGPPSAPTDVTPESP). The segment covering 619 to 632 (TGQGQTHGTHQGTT) has biased composition (low complexity). Basic and acidic residues predominate over residues 638–647 (TTRESQELIT). Polar residues predominate over residues 664 to 678 (HSSPTWKTPPNSTRL). Positions 709-795 (PIGKVTVSNV…QLKVRTVAQK (87 aa)) constitute a Fibronectin type-III 2 domain. Residues N717 and N757 are each glycosylated (N-linked (GlcNAc...) asparagine). The SEA 2 domain occupies 792–904 (VAQKLAGNVR…GKTFMQDYNE (113 aa)). In terms of domain architecture, EGF-like 3; calcium-binding spans 901–945 (DYNECDMKEDDCAPGTCRNTFGSFTCSCDEGGPDSQVEYSGRSCD). 3 disulfides stabilise this stretch: C905–C917, C912–C926, and C928–C944. Residues 939 to 966 (YSGRSCDGDPSGNMTQTPGSEWSPTPAG) are disordered. The span at 950–961 (GNMTQTPGSEWS) shows a compositional bias: polar residues. N951 is a glycosylation site (N-linked (GlcNAc...) asparagine). The 244-residue stretch at 995 to 1238 (SCEIETVIIT…NSCRISCNDF (244 aa)) folds into the ZP domain. An intrachain disulfide couples C1160 to C1218. The chain crosses the membrane as a helical span at residues 1274–1294 (IILLAAAALLVVAGATTLLIL). The Cytoplasmic portion of the chain corresponds to 1295–1319 (RYQRVRQKYNLRIQTDDFSYQVFSQ).

The protein localises to the cell membrane. The polypeptide is Uromodulin-like 1 (Umodl1) (Mus musculus (Mouse)).